The primary structure comprises 277 residues: Thymidylate synthase (277 aa).

Arg-27 provides a ligand contact to dUMP. His-57 serves as a coordination point for (6R)-5,10-methylene-5,6,7,8-tetrahydrofolate. Residue 132–133 (RR) coordinates dUMP. The active-site Nucleophile is the Cys-152. Residues 179-182 (RSAD), Asn-190, and 220-222 (HIY) each bind dUMP. Asp-182 contributes to the (6R)-5,10-methylene-5,6,7,8-tetrahydrofolate binding site. A (6R)-5,10-methylene-5,6,7,8-tetrahydrofolate-binding site is contributed by Ala-276.

The protein belongs to the thymidylate synthase family. Bacterial-type ThyA subfamily. Homodimer.

It is found in the cytoplasm. It carries out the reaction dUMP + (6R)-5,10-methylene-5,6,7,8-tetrahydrofolate = 7,8-dihydrofolate + dTMP. The protein operates within pyrimidine metabolism; dTTP biosynthesis. Catalyzes the reductive methylation of 2'-deoxyuridine-5'-monophosphate (dUMP) to 2'-deoxythymidine-5'-monophosphate (dTMP) while utilizing 5,10-methylenetetrahydrofolate (mTHF) as the methyl donor and reductant in the reaction, yielding dihydrofolate (DHF) as a by-product. This enzymatic reaction provides an intracellular de novo source of dTMP, an essential precursor for DNA biosynthesis. The sequence is that of Thymidylate synthase from Acidovorax sp. (strain JS42).